The sequence spans 316 residues: ATP synthase gamma chain (316 aa).

Belongs to the ATPase gamma chain family. F-type ATPases have 2 components, CF(1) - the catalytic core - and CF(0) - the membrane proton channel. CF(1) has five subunits: alpha(3), beta(3), gamma(1), delta(1), epsilon(1). CF(0) has three main subunits: a, b and c.

It is found in the cellular thylakoid membrane. Its function is as follows. Produces ATP from ADP in the presence of a proton gradient across the membrane. The gamma chain is believed to be important in regulating ATPase activity and the flow of protons through the CF(0) complex. In Prochlorococcus marinus (strain MIT 9211), this protein is ATP synthase gamma chain.